We begin with the raw amino-acid sequence, 647 residues long: DNA ligase (647 aa).

NAD(+) is bound by residues 30–34 (DEEYD), 79–80 (SM), and Glu-105. Catalysis depends on Lys-107, which acts as the N6-AMP-lysine intermediate. NAD(+) is bound by residues Arg-128, Glu-162, and Lys-301. Positions 395, 398, 411, and 416 each coordinate Zn(2+). One can recognise a BRCT domain in the interval 570–647 (KSDGVIFGKT…ESAFNELVKE (78 aa)).

It belongs to the NAD-dependent DNA ligase family. LigA subfamily. Mg(2+) serves as cofactor. Mn(2+) is required as a cofactor.

It catalyses the reaction NAD(+) + (deoxyribonucleotide)n-3'-hydroxyl + 5'-phospho-(deoxyribonucleotide)m = (deoxyribonucleotide)n+m + AMP + beta-nicotinamide D-nucleotide.. In terms of biological role, DNA ligase that catalyzes the formation of phosphodiester linkages between 5'-phosphoryl and 3'-hydroxyl groups in double-stranded DNA using NAD as a coenzyme and as the energy source for the reaction. It is essential for DNA replication and repair of damaged DNA. This Campylobacter jejuni subsp. jejuni serotype O:6 (strain 81116 / NCTC 11828) protein is DNA ligase.